Here is a 210-residue protein sequence, read N- to C-terminus: Probable GTP-binding protein EngB (210 aa).

The region spanning 30–204 (QGYEVAFAGR…YRVLADWMEL (175 aa)) is the EngB-type G domain. Residues 38-45 (GRSNAGKS), 64-68 (GRTQL), 82-85 (DLPG), 149-152 (TKAD), and 182-185 (LFSA) each bind GTP. S45 and T66 together coordinate Mg(2+).

Belongs to the TRAFAC class TrmE-Era-EngA-EngB-Septin-like GTPase superfamily. EngB GTPase family. Requires Mg(2+) as cofactor.

Its function is as follows. Necessary for normal cell division and for the maintenance of normal septation. This Pseudomonas putida (strain ATCC 47054 / DSM 6125 / CFBP 8728 / NCIMB 11950 / KT2440) protein is Probable GTP-binding protein EngB.